Reading from the N-terminus, the 345-residue chain is Protein RecA (345 aa).

Residue 68 to 75 (GVESSGKT) participates in ATP binding.

It belongs to the RecA family.

Its subcellular location is the cytoplasm. In terms of biological role, can catalyze the hydrolysis of ATP in the presence of single-stranded DNA, the ATP-dependent uptake of single-stranded DNA by duplex DNA, and the ATP-dependent hybridization of homologous single-stranded DNAs. It interacts with LexA causing its activation and leading to its autocatalytic cleavage. The chain is Protein RecA from Aquifex aeolicus (strain VF5).